Consider the following 121-residue polypeptide: Large ribosomal subunit protein bL21c (121 aa).

The protein belongs to the bacterial ribosomal protein bL21 family. Part of the 50S ribosomal subunit.

It is found in the plastid. Its subcellular location is the chloroplast. Functionally, this protein binds to 23S rRNA. This Chaetosphaeridium globosum (Charophycean green alga) protein is Large ribosomal subunit protein bL21c.